A 417-amino-acid chain; its full sequence is Argininosuccinate synthase (417 aa).

An ATP-binding site is contributed by 8–16 (AYSGGLDTS). Residue tyrosine 87 participates in L-citrulline binding. Glycine 117 is an ATP binding site. Residues threonine 119, asparagine 123, and aspartate 124 each contribute to the L-aspartate site. Asparagine 123 contacts L-citrulline. The L-citrulline site is built by arginine 127, serine 175, glutamate 259, and tyrosine 271.

The protein belongs to the argininosuccinate synthase family. Type 1 subfamily. In terms of assembly, homotetramer.

The protein localises to the cytoplasm. It catalyses the reaction L-citrulline + L-aspartate + ATP = 2-(N(omega)-L-arginino)succinate + AMP + diphosphate + H(+). It participates in amino-acid biosynthesis; L-arginine biosynthesis; L-arginine from L-ornithine and carbamoyl phosphate: step 2/3. In Clavibacter sepedonicus (Clavibacter michiganensis subsp. sepedonicus), this protein is Argininosuccinate synthase.